Consider the following 643-residue polypeptide: MMIWVPALIFLSACLLPRSNGTPLEWDFAVTLRTKIQFLDSSWQTIATAAHEFDELSALTFDESEELIYFNDRQHQNGSIFSLRRDAYAASHVAQQAIQRTGNESVGGLAYDPLNRNLFWSDTLQRKIFFASIDSPPSQPPKVLVDLSQEGARPEGVAVDICRRKLYWTNSNITHPTVERIDVDGSNRVIIADSDIDMPKGIVVDQLSDRLFWIDDLKGVFFAVMSSNLDGSDRQVVLKDKHHEPQNLALTNDAIFWTDRTTKAVWSHPKRAAVKATTTVRPEVESSTDGTESESKQESEPVEDCPLVRVANLSEEARGIVARTGFYQRLQKDAHCSSIVRKIKLRLDEMSEKKEVRSLVDERMDQLERDHCMNGGSYISKRDLCICPAGFKGSRCEIRECHNYCVHGTCQMSDLAYPKCYCQPGFTGERCEVSNCAGLCLNGGHCRLGETEKDQPSCECPANFAGERCEQNSTQICSLFCRLLKHEPEIHVPFGCHDICEELALDNSTNIAIPQYQHLEVCQTPFVWTSSVIIILVVGIVFSLLLITTIIHGIRRLYKPKRPRIRKTFVVRKQPRTNSAGDTPLTNRPMTAEQCEITIENCCNMNICETPCFDPKLVEQTLAKSSCKEDKKILIHNMEDDLY.

An N-terminal signal peptide occupies residues 1–21 (MMIWVPALIFLSACLLPRSNG). Residues 22-530 (TPLEWDFAVT…VCQTPFVWTS (509 aa)) are Extracellular-facing. Residues N77 and N103 are each glycosylated (N-linked (GlcNAc...) asparagine). LDL-receptor class B repeat units lie at residues 116–163 (RNLF…DICR), 164–208 (RKLY…DQLS), and 209–254 (DRLF…TNDA). N172 carries an N-linked (GlcNAc...) asparagine glycan. Positions 276 to 290 (ATTTVRPEVESSTDG) are enriched in polar residues. Positions 276–303 (ATTTVRPEVESSTDGTESESKQESEPVE) are disordered. Residue N312 is glycosylated (N-linked (GlcNAc...) asparagine). EGF-like domains lie at 363 to 397 (RMDQLERDHCMNGGSYISKRDLCICPAGFKGSRCE), 398 to 429 (IRECHNYCVHGTCQMSDLAYPKCYCQPGFTGE), and 432 to 470 (EVSNCAGLCLNGGHCRLGETEKDQPSCECPANFAGERCE). Intrachain disulfides connect C372–C385, C387–C396, C401–C410, C405–C420, C436–C446, C440–C458, and C460–C469. N472 and N507 each carry an N-linked (GlcNAc...) asparagine glycan. The helical transmembrane segment at 531–551 (SVIIILVVGIVFSLLLITTII) threads the bilayer. The Cytoplasmic segment spans residues 552-643 (HGIRRLYKPK…LIHNMEDDLY (92 aa)).

This sequence belongs to the cueball family.

Its subcellular location is the cell membrane. Functionally, has a role in spermatogenesis and oogenesis. In Drosophila ananassae (Fruit fly), this protein is Protein cueball.